Reading from the N-terminus, the 326-residue chain is Dehydrogenase/reductase SDR family protein 7-like (326 aa).

At 1–17 the chain is on the cytoplasmic side; it reads MKVQDMDKCAPSSDWNV. Residues 18–38 form a helical; Signal-anchor for type II membrane protein membrane-spanning segment; it reads LYWVLGTVLMPVALPLAIINI. The Peroxisomal segment spans residues 39–326; sequence WQRFQAQKFR…KLENAEKKST (288 aa). An NAD(+)-binding site is contributed by 57 to 81; the sequence is LITGASSGLGESLAHVFYRAGCRVI. S193 contacts substrate. The active-site Proton acceptor is Y206.

It belongs to the short-chain dehydrogenases/reductases (SDR) family.

The protein localises to the peroxisome membrane. In terms of biological role, putative oxidoreductase. In Drosophila melanogaster (Fruit fly), this protein is Dehydrogenase/reductase SDR family protein 7-like.